The following is a 506-amino-acid chain: 5'-3' exonuclease PLD4 (506 aa).

The helical transmembrane segment at 31–51 (LQVLGALAVLWLGSVALICLL) threads the bilayer. Cys94 and Cys250 form a disulfide bridge. 2 N-linked (GlcNAc...) asparagine glycosylation sites follow: Asn150 and Asn171. The PLD phosphodiesterase 1 domain occupies 209-236 (TRGVLHSKFWVVDGRHIYMGSANMDWRS). The active-site Proton donor is the His214. Residues Lys216 and Asp221 contribute to the active site. N-linked (GlcNAc...) asparagine glycans are attached at residues Asn249, Asn281, Asn403, Asn417, and Asn427. A disulfide bridge connects residues Cys379 and Cys502. One can recognise a PLD phosphodiesterase 2 domain in the interval 423-449 (FSRVNHSKFMVTEKAAYIGTSNWSEDY). His428 serves as the catalytic Nucleophile. N-linked (GlcNAc...) asparagine glycosylation is present at Asn444.

This sequence belongs to the phospholipase D family. As to quaternary structure, homodimer. Post-translationally, highly N-glycosylated. As to expression, expressed in plasmacytoid dendritic cells and monocytes (at protein level).

The protein localises to the endoplasmic reticulum membrane. Its subcellular location is the golgi apparatus. The protein resides in the trans-Golgi network membrane. It localises to the nucleus. It is found in the early endosome. The protein localises to the cytoplasmic vesicle. Its subcellular location is the phagosome. The protein resides in the lysosome. It carries out the reaction Exonucleolytic cleavage in the 5'- to 3'-direction to yield nucleoside 3'-phosphates.. The catalysed reaction is a 5'-end 5'-dephospho-ribonucleotidyl-ribonucleotide-RNA + H2O = a ribonucleoside 3'-phosphate + a 5'-end dephospho-ribonucleoside-RNA + H(+). The enzyme catalyses a ribonucleoside 3'-phosphate-2'-3'-cyclophospho-GMP + H2O = a ribonucleoside 3'-phosphate + 2',3'-cyclophospho-GMP + H(+). It catalyses the reaction a 5'-end 5'-dephospho-2'-deoxyribonucleotidyl-2'-deoxyribonucleotide in single-stranded DNA + H2O = a 5'-end dephospho-2'-deoxyribonucleoside in single-stranded DNA + a 2'-deoxyribonucleoside 3'-phosphate + H(+). It carries out the reaction a 5'-end 5'-phospho-2'-deoxyribonucleotide in single-stranded DNA + H2O = a 5'-end 5'-dephospho-2'-deoxyribonucleotide in single-stranded DNA + phosphate. The catalysed reaction is a 3-lyso-sn-glycero-1-phospho-(3'-acyl-1'-sn-glycerol) + a 1-acyl-sn-glycerol = a 3-acyl-sn-glycero-1-phospho-(3'-acyl-1'-sn-glycerol) + glycerol. The enzyme catalyses 3-lyso-sn-glycero-1-phospho-(3'-(9Z-octadecenoyl)-1'-sn-glycerol) + 1-(9Z-octadecenoyl)-sn-glycerol = 3-(9Z-octadecenoyl)-sn-glycero-1-phospho-(3'-(9Z-octadecenoyl)-1'-sn-glycerol) + glycerol. With respect to regulation, the exonuclease activity toward ssDNA substrate is Ca(2+) and Mg(2+)-independent, but it is inhibited by Fe(2+), Cu(2+) and to a lesser extent Zn(2+) ions. Functionally, 5'-&gt;3' exonuclease that hydrolyzes the phosphodiester bond of single-stranded DNA (ssDNA) and RNA molecules to form nucleoside 3'-monophosphates and 5'-end 5'-hydroxy deoxyribonucleotide/ribonucleotide fragments. Partially redundant with PLD3, can cleave all four nucleotides displaying higher efficiency for ssDNA and RNA fragments initiated with uridine and guanosine residues and lower efficiency for cytidine-initiated substrates. As a result, it does not always degrade polynucleotides to the single nucleotide level, it can stall at specific sites sparing certain fragments from exonucleolytic degradation. Processes self and pathogenic ssDNA and RNA molecules that reach the endolysosomal compartment via phagocytosis or autophagy and may serve as 'danger' signals for recognition by innate immune receptors such as toll-like receptors (TLRs). Degrades mitochondrial CpG-rich ssDNA fragments to prevent TLR9 activation and autoinflammatory response, but it can cleave viral RNA to generate ligands for TLR7 activation and initiate antiviral immune responses. In plasmacytoid dendritic cells, it cooperates with endonuclease RNASET2 to release 2',3'-cyclic guanosine monophosphate (2',3'-cGMP), a potent stimulatory ligand for TLR7. Produces 2',3'-cGMPs and cytidine-rich RNA fragments that occupy TLR7 ligand-binding pockets and trigger a signaling-competent state. Can exert polynucleotide phosphatase activity toward 5'-phosphorylated ssDNA substrates although at a slow rate. Transphosphatidylase that catalyzes the exchange with R to S stereo-inversion of the glycerol moiety between (S,R)-lysophosphatidylglycerol (LPG) and monoacylglycerol (MAG) substrates to yield (S,S)-bis(monoacylglycero)phosphate (BMP). Can synthesize a variety of (S,S)-BMPs representing the main phospholipid constituent of lysosomal intralumenal vesicle (ILV) membranes that bind acid hydrolases for lipid degradation. Regulates the homeostasis and interorganellar communication of the endolysosomal system with an overall impact on cellular removal of dysfunctional organelles via autophagy as well as proper protein and lipid turnover. May play a role in myotube formation in response to ER stress. The protein is 5'-3' exonuclease PLD4 of Homo sapiens (Human).